The primary structure comprises 644 residues: Protein DA1-related 6 (644 aa).

3 UIM domains span residues 119-138, 181-200, and 244-263; these read EEDE…NNRR, DVDE…KGKG, and DEDE…KGQI. The LIM zinc-binding domain occupies 284–355; sequence SLCGGCNFAV…YVCKEKKMKT (72 aa). The span at 572–589 shows a compositional bias: low complexity; it reads ASSSASSSSRTPPAASAS. A disordered region spans residues 572–591; sequence ASSSASSSSRTPPAASASKK.

In terms of assembly, interacts with ubiquitin.

Its function is as follows. Ubiquitin receptor that probably regulates developmental process. The protein is Protein DA1-related 6 (DAR6) of Arabidopsis thaliana (Mouse-ear cress).